The following is a 30-amino-acid chain: Babycurus-toxin 1 (30 aa).

One can recognise an LCN-type CS-alpha/beta domain in the interval 2–30; it reads KDGYPTNSKGCKISGCLPGENKFCLNECQ.

This sequence belongs to the long (4 C-C) scorpion toxin superfamily. Sodium channel inhibitor family. Expressed by the venom gland.

The protein localises to the secreted. Its function is as follows. Binds to sodium channels (Nav) and inhibits both the activation and inactivation of the activated channels, thereby blocking neuronal transmission. The polypeptide is Babycurus-toxin 1 (Babycurus centrurimorphus (East African scorpion)).